A 284-amino-acid polypeptide reads, in one-letter code: Type II methyltransferase M1.DpnII (284 aa).

S-adenosyl-L-methionine is bound by residues W17, K21, G46, D62, D177, F178, and D194.

The protein belongs to the N(4)/N(6)-methyltransferase family. As to quaternary structure, monomer. Homodimer.

The catalysed reaction is a 2'-deoxyadenosine in DNA + S-adenosyl-L-methionine = an N(6)-methyl-2'-deoxyadenosine in DNA + S-adenosyl-L-homocysteine + H(+). Its function is as follows. An alpha subtype methylase that recognizes the double-stranded sequence 5'-GATC-3', methylates A-2 on both strands, and protects the DNA from cleavage by the DpnII endonuclease. This Streptococcus pneumoniae protein is Type II methyltransferase M1.DpnII.